A 443-amino-acid chain; its full sequence is Protein king tubby (443 aa).

Disordered stretches follow at residues 57–80 (TNGS…NNMR) and 98–191 (HELE…EGDV). Over residues 67–80 (VAMNTSRNHSNNMR) the composition is skewed to polar residues. Residues 113–128 (QQQQSASHSANSTQSQ) are compositionally biased toward low complexity. At S136 the chain carries Phosphoserine. A compositionally biased stretch (gly residues) spans 177–186 (NGTGNGTGGE).

The protein belongs to the TUB family.

The protein localises to the cytoplasm. Its subcellular location is the nucleus. The protein resides in the cell projection. It localises to the cilium membrane. It is found in the rhabdomere. This chain is Protein king tubby, found in Drosophila sechellia (Fruit fly).